The primary structure comprises 185 residues: Elongation factor P (185 aa).

Belongs to the elongation factor P family.

The protein resides in the cytoplasm. It functions in the pathway protein biosynthesis; polypeptide chain elongation. In terms of biological role, involved in peptide bond synthesis. Stimulates efficient translation and peptide-bond synthesis on native or reconstituted 70S ribosomes in vitro. Probably functions indirectly by altering the affinity of the ribosome for aminoacyl-tRNA, thus increasing their reactivity as acceptors for peptidyl transferase. The protein is Elongation factor P of Trichormus variabilis (strain ATCC 29413 / PCC 7937) (Anabaena variabilis).